The sequence spans 542 residues: CTP synthase (542 aa).

Positions 1–265 (MARYIFITGG…DDEVLAAFGL (265 aa)) are amidoligase domain. Serine 13 is a binding site for CTP. A UTP-binding site is contributed by serine 13. Position 14-19 (14-19 (SLGKGL)) interacts with ATP. Position 54 (tyrosine 54) interacts with L-glutamine. An ATP-binding site is contributed by aspartate 71. Residues aspartate 71 and glutamate 139 each coordinate Mg(2+). Residues 146-148 (DIE), 186-191 (KTKPTQ), and lysine 222 contribute to the CTP site. Residues 186 to 191 (KTKPTQ) and lysine 222 contribute to the UTP site. 238–240 (RDA) contacts ATP. A Glutamine amidotransferase type-1 domain is found at 290-541 (TIAIVGKYTG…IQAAVVQSRL (252 aa)). Position 352 (glycine 352) interacts with L-glutamine. Catalysis depends on cysteine 379, which acts as the Nucleophile; for glutamine hydrolysis. Residues 380–383 (FGMQ), glutamate 403, and arginine 469 each bind L-glutamine. Active-site residues include histidine 514 and glutamate 516.

Belongs to the CTP synthase family. As to quaternary structure, homotetramer.

It catalyses the reaction UTP + L-glutamine + ATP + H2O = CTP + L-glutamate + ADP + phosphate + 2 H(+). The catalysed reaction is L-glutamine + H2O = L-glutamate + NH4(+). The enzyme catalyses UTP + NH4(+) + ATP = CTP + ADP + phosphate + 2 H(+). It functions in the pathway pyrimidine metabolism; CTP biosynthesis via de novo pathway; CTP from UDP: step 2/2. With respect to regulation, allosterically activated by GTP, when glutamine is the substrate; GTP has no effect on the reaction when ammonia is the substrate. The allosteric effector GTP functions by stabilizing the protein conformation that binds the tetrahedral intermediate(s) formed during glutamine hydrolysis. Inhibited by the product CTP, via allosteric rather than competitive inhibition. Functionally, catalyzes the ATP-dependent amination of UTP to CTP with either L-glutamine or ammonia as the source of nitrogen. Regulates intracellular CTP levels through interactions with the four ribonucleotide triphosphates. This chain is CTP synthase, found in Nitrobacter hamburgensis (strain DSM 10229 / NCIMB 13809 / X14).